Reading from the N-terminus, the 109-residue chain is Ubiquitin-related modifier 1 homolog (109 aa).

A 1-thioglycine modification is found at glycine 109. Glycine 109 participates in a covalent cross-link: Glycyl lysine isopeptide (Gly-Lys) (interchain with K-? in acceptor proteins).

The protein belongs to the URM1 family. Post-translationally, C-terminal thiocarboxylation occurs in 2 steps, it is first acyl-adenylated (-COAMP) via the hesA/moeB/thiF part of the MOCS3 homolog, then thiocarboxylated (-COSH) via the rhodanese domain of the MOCS3 homolog.

Its subcellular location is the cytoplasm. It participates in tRNA modification; 5-methoxycarbonylmethyl-2-thiouridine-tRNA biosynthesis. Acts as a sulfur carrier required for 2-thiolation of mcm(5)S(2)U at tRNA wobble positions of cytosolic tRNA(Lys), tRNA(Glu) and tRNA(Gln). Serves as sulfur donor in tRNA 2-thiolation reaction by being thiocarboxylated (-COSH) at its C-terminus by MOCS3. The sulfur is then transferred to tRNA to form 2-thiolation of mcm(5)S(2)U. Also acts as a ubiquitin-like protein (UBL) that is covalently conjugated via an isopeptide bond to lysine residues of target proteins. The thiocarboxylated form serves as substrate for conjugation and oxidative stress specifically induces the formation of UBL-protein conjugates. This Anopheles gambiae (African malaria mosquito) protein is Ubiquitin-related modifier 1 homolog.